A 333-amino-acid chain; its full sequence is Probable tRNA pseudouridine synthase B (333 aa).

The Nucleophile role is filled by Asp-66. The 76-residue stretch at 233–308 (LKKIIVKDSA…EVVEITRVIM (76 aa)) folds into the PUA domain.

It belongs to the pseudouridine synthase TruB family. Type 2 subfamily.

It carries out the reaction uridine(55) in tRNA = pseudouridine(55) in tRNA. Its function is as follows. Could be responsible for synthesis of pseudouridine from uracil-55 in the psi GC loop of transfer RNAs. The sequence is that of Probable tRNA pseudouridine synthase B from Methanococcus maripaludis (strain C5 / ATCC BAA-1333).